The sequence spans 433 residues: uncharacterized protein (433 aa).

A TRAM domain is found at 1–59 (MGEEYEVEIGPVAHGGHCIARTSEGQVLFVRHALPGERVLARVTEGEEGARYLRADAVE). Positions 72, 80, 83, and 168 each coordinate [4Fe-4S] cluster. S-adenosyl-L-methionine is bound by residues Gln-262, Tyr-291, Glu-315, and Asp-359. Cys-386 acts as the Nucleophile in catalysis.

Belongs to the class I-like SAM-binding methyltransferase superfamily. RNA M5U methyltransferase family.

This is an uncharacterized protein from Streptomyces avermitilis (strain ATCC 31267 / DSM 46492 / JCM 5070 / NBRC 14893 / NCIMB 12804 / NRRL 8165 / MA-4680).